We begin with the raw amino-acid sequence, 457 residues long: Succinate-semialdehyde dehydrogenase [NADP(+)] (457 aa).

Residues 133–134 (WN), 157–160 (KHAS), and 209–210 (GS) each bind NADP(+). The Proton acceptor role is filled by Glu231. Residue Leu232 participates in NADP(+) binding. Cys265 functions as the Nucleophile in the catalytic mechanism. NADP(+) is bound at residue Glu362.

It belongs to the aldehyde dehydrogenase family.

The catalysed reaction is succinate semialdehyde + NADP(+) + H2O = succinate + NADPH + 2 H(+). In terms of biological role, catalyzes the NADP(+)-dependent oxidation of succinate semialdehyde to succinate. It is believed to be the main source of succinate semialdehyde dehydrogenase activity in Mycobacterium. In Mycobacterium leprae (strain TN), this protein is Succinate-semialdehyde dehydrogenase [NADP(+)] (gabD1).